A 578-amino-acid polypeptide reads, in one-letter code: Transmembrane protein 121B (578 aa).

2 disordered regions span residues 1-84 and 106-129; these read MRPA…ESLS and AGPA…PTSS. Low complexity-rich tracts occupy residues 8-17 and 44-53; these read PRSVSSASGS and GDSSTSTSTS. Positions 54–67 are enriched in gly residues; that stretch reads RGGGGGRRGGGGGS. Serine 167 bears the Phosphoserine mark. The disordered stretch occupies residues 529-557; sequence RARGGYGAPPSAPPPPPPPPQGGSQLGHC. A compositionally biased stretch (pro residues) spans 538–549; that stretch reads PSAPPPPPPPPQ. Residue serine 552 is modified to Phosphoserine.

Belongs to the TMEM121 family. In terms of tissue distribution, widely expressed, especially in adult heart, brain, prostate, testes, peripherical blood leukocytes and fetal brain.

This chain is Transmembrane protein 121B, found in Homo sapiens (Human).